Consider the following 292-residue polypeptide: 4-hydroxy-tetrahydrodipicolinate synthase (292 aa).

Residue T45 coordinates pyruvate. Catalysis depends on Y133, which acts as the Proton donor/acceptor. The active-site Schiff-base intermediate with substrate is the K161. Pyruvate is bound at residue I203.

This sequence belongs to the DapA family. As to quaternary structure, homotetramer; dimer of dimers.

It localises to the cytoplasm. The catalysed reaction is L-aspartate 4-semialdehyde + pyruvate = (2S,4S)-4-hydroxy-2,3,4,5-tetrahydrodipicolinate + H2O + H(+). Its pathway is amino-acid biosynthesis; L-lysine biosynthesis via DAP pathway; (S)-tetrahydrodipicolinate from L-aspartate: step 3/4. Catalyzes the condensation of (S)-aspartate-beta-semialdehyde [(S)-ASA] and pyruvate to 4-hydroxy-tetrahydrodipicolinate (HTPA). In Sodalis glossinidius (strain morsitans), this protein is 4-hydroxy-tetrahydrodipicolinate synthase.